A 192-amino-acid polypeptide reads, in one-letter code: 7-methyl-GTP pyrophosphatase (192 aa).

Residue Asp-69 is the Proton acceptor of the active site.

It belongs to the Maf family. YceF subfamily. Requires a divalent metal cation as cofactor.

The protein resides in the cytoplasm. It catalyses the reaction N(7)-methyl-GTP + H2O = N(7)-methyl-GMP + diphosphate + H(+). Functionally, nucleoside triphosphate pyrophosphatase that hydrolyzes 7-methyl-GTP (m(7)GTP). May have a dual role in cell division arrest and in preventing the incorporation of modified nucleotides into cellular nucleic acids. This is 7-methyl-GTP pyrophosphatase from Pseudomonas savastanoi pv. phaseolicola (strain 1448A / Race 6) (Pseudomonas syringae pv. phaseolicola (strain 1448A / Race 6)).